Here is a 149-residue protein sequence, read N- to C-terminus: Large ribosomal subunit protein uL24 (149 aa).

The protein belongs to the universal ribosomal protein uL24 family. Part of the 50S ribosomal subunit.

Its function is as follows. One of two assembly initiator proteins, it binds directly to the 5'-end of the 23S rRNA, where it nucleates assembly of the 50S subunit. Functionally, located at the polypeptide exit tunnel on the outside of the subunit. The sequence is that of Large ribosomal subunit protein uL24 from Hyperthermus butylicus (strain DSM 5456 / JCM 9403 / PLM1-5).